A 382-amino-acid polypeptide reads, in one-letter code: Serine/threonine-protein kinase US3 homolog (382 aa).

Residues 1–10 (MENKQCDHLT) show a composition bias toward basic and acidic residues. Positions 1–75 (MENKQCDHLT…ASESDEDDDD (75 aa)) are disordered. Residues 12–24 (WFSTTSDASESMD) show a composition bias toward polar residues. Over residues 45–75 (ADEDLYSDISEGDLEYSDCDSASESDEDDDD) the composition is skewed to acidic residues. The region spanning 93–379 (YTVIKTLTPG…AEELLSYPMF (287 aa)) is the Protein kinase domain. ATP is bound by residues 99 to 107 (LTPGSEGRV) and Lys-122. The Proton acceptor role is filled by Asp-207.

It belongs to the protein kinase superfamily. Ser/Thr protein kinase family. Post-translationally, phosphorylated by protein 49; this phosphorylation regulates subsequent phosphorylation of proteins 26 and 29 by US3 homolog. Autophosphorylated.

Its subcellular location is the host cytoplasm. It localises to the host nucleus. It carries out the reaction L-seryl-[protein] + ATP = O-phospho-L-seryl-[protein] + ADP + H(+). The catalysed reaction is L-threonyl-[protein] + ATP = O-phospho-L-threonyl-[protein] + ADP + H(+). Functionally, multifunctional serine/threonine kinase that plays a role in several processes including egress of virus particles from the nucleus, modulation of the actin cytoskeleton and inhibition of apoptosis. Phosphorylates protein 26 and 29, two critical regulators of capsid budding from nucleus to endoplasmic reticulum, thereby facilitating virion egress. Modulates and redistributes host components of the nuclear envelope, including LMNA, emerin/EMD and the nuclear matrix protein MATR3. Phosphorylates envelope glycoprotein B (gB), probably to direct it to the cell surface. Promotes virus intracellular spread by restructuring host cell cytoskeleton. Blocks host apoptosis to extend cell survival and allow efficient viral replication. Promotes viral gene expression by phosphorylating host HDAC2 to reduce viral genome silencing. The sequence is that of Serine/threonine-protein kinase US3 homolog from Equine herpesvirus 1 (strain Ab4p) (EHV-1).